The sequence spans 733 residues: Forkhead box protein K1 (733 aa).

Alanine 2 bears the N-acetylalanine mark. Positions 2–40 are interaction with SIN3A and SIN3B; the sequence is AEVGEDSGARALLALRSAPCSPVLCAAAAAAAFPAAAPP. Positions 36–79 are disordered; sequence AAAPPPAPAQPQPPPGPPPPPPPPLPPGAIAGAGSSGGSSGVSG. The segment covering 37 to 62 has biased composition (pro residues); the sequence is AAPPPAPAQPQPPPGPPPPPPPPLPP. Positions 95–420 are required for interaction with FOXO4 and MEF2C; it reads AASVRQSPGP…PLSSRSAPAS (326 aa). Serine 101 carries the phosphoserine modification. The 53-residue stretch at 123-175 folds into the FHA domain; sequence VTIGRNSSQGSVDLSMGLSSFISRRHLQLSFQEPHFYLRCLGKNGVFVDGAFQ. Omega-N-methylarginine is present on residues arginine 161 and arginine 191. Phosphoserine occurs at positions 213, 223, 239, and 243. Residues threonine 245 and threonine 247 each carry the phosphothreonine modification. 4 positions are modified to phosphoserine: serine 253, serine 257, serine 295, and serine 299. Disordered regions lie at residues 287–306 and 413–436; these read ASEQ…ESKP and SSRS…GLQT. Residues 305–400 constitute a DNA-binding region (fork-head); the sequence is KPPFSYAQLI…EQAFRKRRQR (96 aa). 2 positions are modified to phosphoserine: serine 416 and serine 420. Threonine 422 bears the Phosphothreonine mark. Serine 428 bears the Phosphoserine mark. Threonine 436 bears the Phosphothreonine mark. A phosphoserine mark is found at serine 441, serine 445, and serine 459. The segment covering 676–697 has biased composition (low complexity); it reads VAATATTTPATATTASASASST. The tract at residues 676–733 is disordered; that stretch reads VAATATTTPATATTASASASSTGEPEVKRSRVEEPSGAVTTPAGVIAAAGPQGPGTGE. A compositionally biased stretch (basic and acidic residues) spans 700–709; it reads PEVKRSRVEE.

As to quaternary structure, interacts with SIN3A and SIN3B (via PAH2) to form a complex which represses transcription. Component of SIN3A-, but not SIN3B-, containing multiprotein complexes. Interacts with FOXO4 and MEF2C; both interactions inhibit FOXO4 and MEF2C transactivation activity. Interacts (when phosphorylated) with YWHAE/14-3-3-epsilon; promotes sequestration in the cytoplasm and leads to impaired ability to bind DNA. Interacts with FHL2. Interacts with SRF. Interacts with DVL2 and DVL3; the interaction induces DVL2 nuclear translocation. Interacts with BAP1 (when phosphorylated). Accessory component of the polycomb repressive deubiquitinase (PR-DUB) complex, at least composed of BAP1, one of ASXL1, ASXL2 or (probably) ASXL3 and one of MBD5 or MBD6. The PR-DUB core associates with a number of accessory proteins, including FOXK1, FOXK2, KDM1B, HCFC1 and OGT. Phosphorylation by GSK3 (GSK3A or GSK3B) promotes interaction with YWHAE/14-3-3-epsilon and retention in the cytoplasm. In response to mTORC1 signaling, phosphorylation by GSK3 is prevented, leading to translocation to the nucleus. Expressed both developing and adult tissues. In adults, significant expression is seen in tumors of the brain, colon and lymph node.

It is found in the nucleus. The protein localises to the cytoplasm. Transcriptional regulator involved in different processes such as glucose metabolism, aerobic glycolysis, muscle cell differentiation and autophagy. Recognizes and binds the forkhead DNA sequence motif (5'-GTAAACA-3') and can both act as a transcription activator or repressor, depending on the context. Together with FOXK2, acts as a key regulator of metabolic reprogramming towards aerobic glycolysis, a process in which glucose is converted to lactate in the presence of oxygen. Acts by promoting expression of enzymes for glycolysis (such as hexokinase-2 (HK2), phosphofructokinase, pyruvate kinase (PKLR) and lactate dehydrogenase), while suppressing further oxidation of pyruvate in the mitochondria by up-regulating pyruvate dehydrogenase kinases PDK1 and PDK4. Probably plays a role in gluconeogenesis during overnight fasting, when lactate from white adipose tissue and muscle is the main substrate. Involved in mTORC1-mediated metabolic reprogramming: in response to mTORC1 signaling, translocates into the nucleus and regulates the expression of genes associated with glycolysis and downstream anabolic pathways, such as HIF1A, thereby regulating glucose metabolism. Together with FOXK2, acts as a negative regulator of autophagy in skeletal muscle: in response to starvation, enters the nucleus, binds the promoters of autophagy genes and represses their expression, preventing proteolysis of skeletal muscle proteins. Acts as a transcriptional regulator of the myogenic progenitor cell population in skeletal muscle. Binds to the upstream enhancer region (CCAC box) of myoglobin (MB) gene, regulating the myogenic progenitor cell population. Promotes muscle progenitor cell proliferation by repressing the transcriptional activity of FOXO4, thereby inhibiting myogenic differentiation. Involved in remodeling processes of adult muscles that occur in response to physiological stimuli. Required to correct temporal orchestration of molecular and cellular events necessary for muscle repair. Represses myogenic differentiation by inhibiting MEFC activity. Positively regulates Wnt/beta-catenin signaling by translocating DVL into the nucleus. Reduces virus replication, probably by binding the interferon stimulated response element (ISRE) to promote antiviral gene expression. Accessory component of the polycomb repressive deubiquitinase (PR-DUB) complex; recruits the PR-DUB complex to specific FOXK1-bound genes. This is Forkhead box protein K1 from Homo sapiens (Human).